Consider the following 286-residue polypeptide: Polyamine aminopropyltransferase (286 aa).

Residues 5 to 238 (TMWHETLHDQ…GIMTFAWATD (234 aa)) form the PABS domain. S-methyl-5'-thioadenosine is bound at residue glutamine 33. Spermidine contacts are provided by histidine 64 and aspartate 88. S-methyl-5'-thioadenosine-binding positions include glutamate 108 and 140-141 (DG). Aspartate 158 functions as the Proton acceptor in the catalytic mechanism. Spermidine is bound at residue 158–161 (DCTD). Proline 165 is an S-methyl-5'-thioadenosine binding site.

Belongs to the spermidine/spermine synthase family. In terms of assembly, homodimer or homotetramer.

It localises to the cytoplasm. The enzyme catalyses S-adenosyl 3-(methylsulfanyl)propylamine + putrescine = S-methyl-5'-thioadenosine + spermidine + H(+). It participates in amine and polyamine biosynthesis; spermidine biosynthesis; spermidine from putrescine: step 1/1. Catalyzes the irreversible transfer of a propylamine group from the amino donor S-adenosylmethioninamine (decarboxy-AdoMet) to putrescine (1,4-diaminobutane) to yield spermidine. This is Polyamine aminopropyltransferase from Salmonella schwarzengrund (strain CVM19633).